We begin with the raw amino-acid sequence, 504 residues long: 2-methylcitrate dehydratase 2 (504 aa).

This sequence belongs to the PrpD family. In terms of assembly, monomer.

It carries out the reaction (2S,3S)-2-methylcitrate = 2-methyl-cis-aconitate + H2O. It catalyses the reaction citrate = D-threo-isocitrate. It functions in the pathway organic acid metabolism; propanoate degradation. It participates in carbohydrate metabolism; tricarboxylic acid cycle; isocitrate from oxaloacetate: step 1/2. Involved in the catabolism of short chain fatty acids (SCFA) via the 2-methylcitrate cycle I (propionate degradation route). Catalyzes the dehydration of 2-methylcitrate (2-MC) to yield the cis isomer 2-methyl-aconitate. Could also catalyze the dehydration of citrate and the hydration of cis-aconitate. The sequence is that of 2-methylcitrate dehydratase 2 (prpD2) from Corynebacterium glutamicum (strain ATCC 13032 / DSM 20300 / JCM 1318 / BCRC 11384 / CCUG 27702 / LMG 3730 / NBRC 12168 / NCIMB 10025 / NRRL B-2784 / 534).